A 95-amino-acid polypeptide reads, in one-letter code: Co-chaperonin GroES (95 aa).

It belongs to the GroES chaperonin family. As to quaternary structure, heptamer of 7 subunits arranged in a ring. Interacts with the chaperonin GroEL.

The protein resides in the cytoplasm. Its function is as follows. Together with the chaperonin GroEL, plays an essential role in assisting protein folding. The GroEL-GroES system forms a nano-cage that allows encapsulation of the non-native substrate proteins and provides a physical environment optimized to promote and accelerate protein folding. GroES binds to the apical surface of the GroEL ring, thereby capping the opening of the GroEL channel. In Ruegeria pomeroyi (strain ATCC 700808 / DSM 15171 / DSS-3) (Silicibacter pomeroyi), this protein is Co-chaperonin GroES.